Consider the following 488-residue polypeptide: Multidrug resistance outer membrane protein MdtP (488 aa).

Residues 1-23 (MINRQLSRLLLCSILGSTTLISG) form the signal peptide. Cys-24 carries the N-palmitoyl cysteine lipid modification. Residue Cys-24 is the site of S-diacylglycerol cysteine attachment.

This sequence belongs to the outer membrane factor (OMF) (TC 1.B.17) family. As to quaternary structure, could be part of a tripartite efflux system composed of MdtN, MdtO and MdtP.

The protein localises to the cell outer membrane. Functionally, could be involved in resistance to puromycin, acriflavine and tetraphenylarsonium chloride. In Escherichia coli O6:H1 (strain CFT073 / ATCC 700928 / UPEC), this protein is Multidrug resistance outer membrane protein MdtP (mdtP).